Reading from the N-terminus, the 888-residue chain is Alanine--tRNA ligase (888 aa).

Residues histidine 564, histidine 568, cysteine 676, and histidine 680 each contribute to the Zn(2+) site.

Belongs to the class-II aminoacyl-tRNA synthetase family. Zn(2+) serves as cofactor.

Its subcellular location is the cytoplasm. The enzyme catalyses tRNA(Ala) + L-alanine + ATP = L-alanyl-tRNA(Ala) + AMP + diphosphate. In terms of biological role, catalyzes the attachment of alanine to tRNA(Ala) in a two-step reaction: alanine is first activated by ATP to form Ala-AMP and then transferred to the acceptor end of tRNA(Ala). Also edits incorrectly charged Ser-tRNA(Ala) and Gly-tRNA(Ala) via its editing domain. The polypeptide is Alanine--tRNA ligase (Bartonella tribocorum (strain CIP 105476 / IBS 506)).